The primary structure comprises 148 residues: Lysozyme-like protein 1 (148 aa).

A signal peptide spans Met-1–Ser-19. The 129-residue stretch at Lys-20–Ser-148 folds into the C-type lysozyme domain. 4 cysteine pairs are disulfide-bonded: Cys-25/Cys-145, Cys-49/Cys-133, Cys-83/Cys-98, and Cys-94/Cys-112. Glu-54 is an active-site residue. N-linked (GlcNAc...) asparagine glycosylation occurs at Asn-58. Asp-71 is a catalytic residue.

Belongs to the glycosyl hydrolase 22 family. In terms of assembly, monomer.

The protein resides in the secreted. It catalyses the reaction Hydrolysis of (1-&gt;4)-beta-linkages between N-acetylmuramic acid and N-acetyl-D-glucosamine residues in a peptidoglycan and between N-acetyl-D-glucosamine residues in chitodextrins.. The chain is Lysozyme-like protein 1 (Lyzl1) from Mus musculus (Mouse).